The chain runs to 389 residues: Putative teichuronic acid biosynthesis glycosyltransferase TuaC (389 aa).

The protein belongs to the glycosyltransferase group 1 family. Glycosyltransferase 4 subfamily.

Its pathway is cell wall biogenesis; teichuronic acid biosynthesis. This chain is Putative teichuronic acid biosynthesis glycosyltransferase TuaC (tuaC), found in Bacillus subtilis (strain 168).